We begin with the raw amino-acid sequence, 146 residues long: Large ribosomal subunit protein uL15 (146 aa).

The disordered stretch occupies residues 1-51; that stretch reads MQLNTIKPAEGSKKNRRHVGRGIGSGLGKTAGRGHKGQKSRSGGFHKVGFE. Positions 21–31 are enriched in gly residues; it reads RGIGSGLGKTA.

The protein belongs to the universal ribosomal protein uL15 family. As to quaternary structure, part of the 50S ribosomal subunit.

In terms of biological role, binds to the 23S rRNA. The polypeptide is Large ribosomal subunit protein uL15 (Polynucleobacter necessarius subsp. necessarius (strain STIR1)).